Here is a 313-residue protein sequence, read N- to C-terminus: L-lactate dehydrogenase 1 (313 aa).

4 residues coordinate NAD(+): Val15, Asp36, Arg41, and Tyr66. Substrate contacts are provided by residues Gln83, Arg89, and 121 to 124 (NPVD). Residues 119–121 (ASN) and Ser144 each bind NAD(+). Residue 149 to 152 (DTAR) participates in substrate binding. Arg154 and His169 together coordinate beta-D-fructose 1,6-bisphosphate. Catalysis depends on His176, which acts as the Proton acceptor. Tyr218 is subject to Phosphotyrosine. Thr227 lines the substrate pocket.

This sequence belongs to the LDH/MDH superfamily. LDH family. Homotetramer.

It is found in the cytoplasm. It carries out the reaction (S)-lactate + NAD(+) = pyruvate + NADH + H(+). It functions in the pathway fermentation; pyruvate fermentation to lactate; (S)-lactate from pyruvate: step 1/1. With respect to regulation, allosterically activated by fructose 1,6-bisphosphate (FBP). Functionally, catalyzes the conversion of lactate to pyruvate. This Listeria monocytogenes serotype 4b (strain F2365) protein is L-lactate dehydrogenase 1.